The primary structure comprises 82 residues: DinI-like protein (82 aa).

This sequence belongs to the DinI family.

The protein is DinI-like protein of Enterobacteria phage VT1-Sakai.